The following is a 496-amino-acid chain: 6-phosphogluconate dehydrogenase, decarboxylating (496 aa).

NADP(+)-binding positions include 13–18 (GLDVSI), 24–26 (DNV), 68–70 (ITH), and N96. Substrate-binding positions include N96 and 122–124 (SGG). The Proton acceptor role is filled by K178. 181–182 (HN) serves as a coordination point for substrate. Catalysis depends on E185, which acts as the Proton donor. Residues R300 and H468 each contribute to the substrate site. Positions 476–496 (PGEDPGPVSKGPHHYEWRPAK) are disordered.

This sequence belongs to the 6-phosphogluconate dehydrogenase family. Homodimer.

It localises to the cytoplasm. The catalysed reaction is 6-phospho-D-gluconate + NADP(+) = D-ribulose 5-phosphate + CO2 + NADPH. It functions in the pathway carbohydrate degradation; pentose phosphate pathway; D-ribulose 5-phosphate from D-glucose 6-phosphate (oxidative stage): step 3/3. Its function is as follows. Catalyzes the oxidative decarboxylation of 6-phosphogluconate to ribulose 5-phosphate and CO(2), with concomitant reduction of NADP to NADPH. This Emericella nidulans (strain FGSC A4 / ATCC 38163 / CBS 112.46 / NRRL 194 / M139) (Aspergillus nidulans) protein is 6-phosphogluconate dehydrogenase, decarboxylating.